Consider the following 324-residue polypeptide: Probable acrylyl-CoA reductase AcuI (324 aa).

Residues Tyr41, 156–159 (SGGV), 178–180 (SGR), Arg198, Leu242, Ile256, Ser267, and Asn313 each bind NADP(+).

The protein belongs to the zinc-containing alcohol dehydrogenase family. Acrylyl-CoA reductase subfamily. As to quaternary structure, homodimer.

It localises to the cytoplasm. The enzyme catalyses propanoyl-CoA + NADP(+) = acryloyl-CoA + NADPH + H(+). In terms of biological role, probably catalyzes the NADPH-dependent reduction of acrylyl-CoA to propanoyl-CoA. The polypeptide is Probable acrylyl-CoA reductase AcuI (acuI) (Escherichia coli (strain K12)).